Here is a 390-residue protein sequence, read N- to C-terminus: Pyruvate dehydrogenase E1 component subunit alpha, somatic form, mitochondrial (390 aa).

Residues 1-29 (MRKMLAAVSRVLSGVAQKPASRVLVASRH) constitute a mitochondrion transit peptide. N6-acetyllysine; alternate is present on Lys63. Residue Lys63 is modified to N6-succinyllysine; alternate. Positions 92, 118, 119, 157, 165, 167, 196, 197, 198, 225, and 227 each coordinate pyruvate. Thiamine diphosphate-binding residues include Tyr118 and Arg119. 6 residues coordinate thiamine diphosphate: Gly165, Val167, Asp196, Gly197, Ala198, and Asn225. Asp196 is a Mg(2+) binding site. Positions 225 and 227 each coordinate Mg(2+). The residue at position 232 (Ser232) is a Phosphoserine; by PDK1. At Lys244 the chain carries N6-acetyllysine; alternate. The residue at position 244 (Lys244) is an N6-succinyllysine; alternate. Lys267 is modified (N6-acetyllysine). Lys277 carries the N6-succinyllysine modification. His292 serves as a coordination point for thiamine diphosphate. Position 293 is a phosphoserine; by PDK1, PDK2, PDK3 and PDK4 (Ser293). Ser295 is subject to Phosphoserine. Ser300 is modified (phosphoserine; by PDK1, PDK2, PDK3 and PDK4). Residue Tyr301 is modified to Phosphotyrosine. Residue Lys313 is modified to N6-acetyllysine; alternate. Lys313 carries the post-translational modification N6-succinyllysine; alternate. Residues Lys321 and Lys336 each carry the N6-acetyllysine modification. The residue at position 385 (Lys385) is an N6-succinyllysine.

In terms of assembly, heterotetramer of two PDHA1 and two PDHB subunits. The heterotetramer interacts with DLAT, and is part of the multimeric pyruvate dehydrogenase complex that contains multiple copies of pyruvate dehydrogenase (E1), dihydrolipoamide acetyltransferase (DLAT, E2) and lipoamide dehydrogenase (DLD, E3). These subunits are bound to an inner core composed of about 48 DLAT and 12 PDHX molecules. Thiamine diphosphate serves as cofactor. Requires Mg(2+) as cofactor. Phosphorylation at Ser-232, Ser-293 and Ser-300 by PDK family kinases inactivates the enzyme; for this phosphorylation at a single site is sufficient. Phosphorylation at Ser-293 interferes with access to active site, and thereby inactivates the enzyme. Dephosphorylation at all three sites, i.e. at Ser-232, Ser-293 and Ser-300, is required for reactivation. In terms of processing, acetylation alters the phosphorylation pattern. Deacetylated by SIRT3.

Its subcellular location is the mitochondrion matrix. The enzyme catalyses N(6)-[(R)-lipoyl]-L-lysyl-[protein] + pyruvate + H(+) = N(6)-[(R)-S(8)-acetyldihydrolipoyl]-L-lysyl-[protein] + CO2. Pyruvate dehydrogenase activity is inhibited by phosphorylation of PDHA1; it is reactivated by dephosphorylation. Its function is as follows. The pyruvate dehydrogenase complex catalyzes the overall conversion of pyruvate to acetyl-CoA and CO(2), and thereby links the glycolytic pathway to the tricarboxylic cycle. The sequence is that of Pyruvate dehydrogenase E1 component subunit alpha, somatic form, mitochondrial (PDHA1) from Bos taurus (Bovine).